A 371-amino-acid chain; its full sequence is Gustatory and pheromone receptor 39a, isoform A (371 aa).

Over 1–41 the chain is Cytoplasmic; that stretch reads MSKVCRDLRIYLRLLHIMGMMCWHFDSDHCQLVATSGSERY. A helical transmembrane segment spans residues 42–62; sequence AVVYAGCILVSTTAGFIFALL. Topologically, residues 63 to 80 are extracellular; that stretch reads HPSRFHIAIYNQTGNFYE. Asparagine 73 carries an N-linked (GlcNAc...) asparagine glycan. Residues 81–101 traverse the membrane as a helical segment; it reads AVIFRSTCVVLFLVYVILYAW. Over 102–127 the chain is Cytoplasmic; the sequence is RHRYRDLVQHILRLNRRCASSCTNQQ. A helical transmembrane segment spans residues 128–148; the sequence is FLHNIILYGMLTILCFGNYLH. At 149-161 the chain is on the extracellular side; it reads GYTRAGLATLPLA. A helical membrane pass occupies residues 162 to 182; that stretch reads LCMLVYIFAFLVLCLLLMFFV. The Cytoplasmic portion of the chain corresponds to 183 to 228; it reads SLKQVMTAGLIHYNQQLCQGDLISGLRGRQQILKLCGGELNECFGL. A helical transmembrane segment spans residues 229-249; sequence LMLPIVALVLLMAPSGPFFLI. Over 250–263 the chain is Extracellular; the sequence is STVLEGKFRPDECL. A helical membrane pass occupies residues 264–284; it reads IMLLTSSTWDTPWMIMLVLML. Residues 285 to 340 are Cytoplasmic-facing; the sequence is RTNGISEEANKTAKMLTKVPRTGTGLDRMIEKFLLKNLRQKPILTAYGFFALDKST. The chain crosses the membrane as a helical span at residues 341-361; it reads LFKLFTAIFTYMVILVQFKEM. The Extracellular segment spans residues 362-371; that stretch reads ENSTKSINKF. Residue asparagine 363 is glycosylated (N-linked (GlcNAc...) asparagine).

Belongs to the insect chemoreceptor superfamily. Gustatory receptor (GR) family. Gr21a subfamily. As to expression, expressed in the adult labellar chemosensory neurons, and adult thorax and wing. In larvae, is expressed in neurons of the posterior pharyngeal sense organ.

The protein localises to the cell membrane. In terms of biological role, gustatory receptor which mediates acceptance or avoidance behavior, depending on its substrates. Plays a role in sustaining courtship behavior in males, possibly through the reception of a stimulating arrestant pheromone. The sequence is that of Gustatory and pheromone receptor 39a, isoform A (Gr39a) from Drosophila melanogaster (Fruit fly).